The primary structure comprises 134 residues: Small ribosomal subunit protein uS12 (134 aa).

3-methylthioaspartic acid is present on D89. Residues 103-134 (DTAGVKDRKQGRSKYGAKRPKPGEAAATGKKK) are disordered. Residues 113 to 122 (GRSKYGAKRP) show a composition bias toward basic residues.

It belongs to the universal ribosomal protein uS12 family. As to quaternary structure, part of the 30S ribosomal subunit. Contacts proteins S8 and S17. May interact with IF1 in the 30S initiation complex.

Functionally, with S4 and S5 plays an important role in translational accuracy. Interacts with and stabilizes bases of the 16S rRNA that are involved in tRNA selection in the A site and with the mRNA backbone. Located at the interface of the 30S and 50S subunits, it traverses the body of the 30S subunit contacting proteins on the other side and probably holding the rRNA structure together. The combined cluster of proteins S8, S12 and S17 appears to hold together the shoulder and platform of the 30S subunit. The chain is Small ribosomal subunit protein uS12 from Thermosynechococcus vestitus (strain NIES-2133 / IAM M-273 / BP-1).